Consider the following 336-residue polypeptide: Foldase protein PrsA (336 aa).

A signal peptide spans 1–22 (MKSAKKLLSVLCLGIFILTFTA). Cysteine 23 carries N-palmitoyl cysteine lipidation. Residue cysteine 23 is the site of S-diacylglycerol cysteine attachment. In terms of domain architecture, PpiC spans 194 to 286 (PNTMNVSHIL…FGYHIIKINS (93 aa)).

It belongs to the PrsA family.

Its subcellular location is the cell membrane. The catalysed reaction is [protein]-peptidylproline (omega=180) = [protein]-peptidylproline (omega=0). Plays a major role in protein secretion by helping the post-translocational extracellular folding of several secreted proteins. This is Foldase protein PrsA from Clostridium botulinum (strain Okra / Type B1).